The following is a 311-amino-acid chain: Pyrimidine-specific ribonucleoside hydrolase RihA (311 aa).

His-240 is an active-site residue.

This sequence belongs to the IUNH family. RihA subfamily.

In terms of biological role, hydrolyzes with equal efficiency cytidine or uridine to ribose and cytosine or uracil, respectively. The chain is Pyrimidine-specific ribonucleoside hydrolase RihA from Escherichia coli (strain K12 / MC4100 / BW2952).